The chain runs to 200 residues: MISPENVVPMVIESSARGERAFDIYSLLLKERIIFLGSQINDQVANLVIAQLLFLDREDPDKDISLYIHSPGGVISAGLAMYDTMQLIRPKVSTICVGVAASMATVLLCAGAKGKRYALPNATIHMHQAMGGAQGQASDIEIAAREIMRQQDILRNILVKHTGQTMEKIVHDSDRDYYLSAQQAVEYGLIDEILQKPENK.

The active-site Nucleophile is Ser102. Residue His127 is part of the active site.

The protein belongs to the peptidase S14 family. As to quaternary structure, fourteen ClpP subunits assemble into 2 heptameric rings which stack back to back to give a disk-like structure with a central cavity, resembling the structure of eukaryotic proteasomes.

Its subcellular location is the cytoplasm. The catalysed reaction is Hydrolysis of proteins to small peptides in the presence of ATP and magnesium. alpha-casein is the usual test substrate. In the absence of ATP, only oligopeptides shorter than five residues are hydrolyzed (such as succinyl-Leu-Tyr-|-NHMec, and Leu-Tyr-Leu-|-Tyr-Trp, in which cleavage of the -Tyr-|-Leu- and -Tyr-|-Trp bonds also occurs).. Cleaves peptides in various proteins in a process that requires ATP hydrolysis. Has a chymotrypsin-like activity. Plays a major role in the degradation of misfolded proteins. The chain is ATP-dependent Clp protease proteolytic subunit from Dehalococcoides mccartyi (strain ATCC BAA-2100 / JCM 16839 / KCTC 5957 / BAV1).